The chain runs to 56 residues: MSRRRGIMSSKLKEELAKELGFYDTVQAEGWGAIRAKDAGNMVKRAVELAQQQLKQ.

It belongs to the alpha/beta-type SASP family.

May play some important role in either sporulation or the dormant spore. This is Protein SspF (sspF) from Priestia megaterium (strain ATCC 12872 / QMB1551) (Bacillus megaterium).